The following is a 284-amino-acid chain: 2,3,4,5-tetrahydropyridine-2,6-dicarboxylate N-succinyltransferase (284 aa).

Residues R111 and D148 each contribute to the substrate site.

It belongs to the transferase hexapeptide repeat family. In terms of assembly, homotrimer.

The protein resides in the cytoplasm. It catalyses the reaction (S)-2,3,4,5-tetrahydrodipicolinate + succinyl-CoA + H2O = (S)-2-succinylamino-6-oxoheptanedioate + CoA. The protein operates within amino-acid biosynthesis; L-lysine biosynthesis via DAP pathway; LL-2,6-diaminopimelate from (S)-tetrahydrodipicolinate (succinylase route): step 1/3. This Chelativorans sp. (strain BNC1) protein is 2,3,4,5-tetrahydropyridine-2,6-dicarboxylate N-succinyltransferase.